The chain runs to 308 residues: Probable lipid phosphate phosphatase 4 (308 aa).

6 helical membrane passes run 26-46, 66-86, 93-113, 162-182, 193-213, and 226-246; these read WLILVVLGLIDIVLNVIEPFH, IPMWAVPIICILVPICIFIVY, VYDLHHAILGIGFSCLVTGVT, SFPSGHTSWSFAGLTFLAWYL, GHVAKLCLVFLPILISILIGI, and VFAGAIIGIFVASFSYLHFFP. Residues 274–308 form a disordered region; that stretch reads MTRTGSRGMLGNDVEPGNSASSPHDRHRESTDSDF. Residues 296-308 are compositionally biased toward basic and acidic residues; sequence PHDRHRESTDSDF.

The protein belongs to the PA-phosphatase related phosphoesterase family.

It is found in the membrane. This chain is Probable lipid phosphate phosphatase 4 (LPP4), found in Arabidopsis thaliana (Mouse-ear cress).